The sequence spans 1248 residues: Ankyrin repeat and sterile alpha motif domain-containing protein 1B (1248 aa).

ANK repeat units lie at residues 2–31 (GKDQ…GGIL), 58–87 (SGYT…STNV), 91–120 (KGYF…SHSR), 127–156 (ENET…DPTI), 160–189 (KLET…NLMS), 193–222 (RKHT…DVSC), and 225–254 (EKGS…DANI). Positions 296 to 322 (EPVQEDATQETHISSPVESPSQKTKSE) are disordered. The span at 305 to 322 (ETHISSPVESPSQKTKSE) shows a compositional bias: polar residues. Ser-309, Ser-310, Ser-314, Ser-353, and Ser-364 each carry phosphoserine. Disordered regions lie at residues 367 to 400 (ELGK…NTCG), 474 to 514 (APSP…PDTA), and 558 to 623 (SFTA…ENPF). Residues 371–384 (NGSQSVRTSSTINL) show a composition bias toward polar residues. Positions 388–397 (EVEEEDDDEN) are enriched in acidic residues. Phosphothreonine is present on Thr-503. Residues Ser-507 and Ser-510 each carry the phosphoserine modification. Positions 558–575 (SFTASPPASPPTSSVGTT) are enriched in low complexity. Residues 577–601 (VKNEGTNHTDDLSRQDDNDPPKEYD) show a composition bias toward basic and acidic residues. Phosphoserine is present on Ser-738. A disordered region spans residues 749 to 777 (EKTSRVNWSESSTAEHSSKGNSERTPSFT). Positions 753–763 (RVNWSESSTAE) are enriched in polar residues. At Thr-773 the chain carries Phosphothreonine. Phosphoserine is present on Ser-775. SAM domains follow at residues 810 to 876 (CPVQ…LPKM) and 884 to 949 (YHPT…RLHD). At Tyr-901 the chain carries Phosphotyrosine. Positions 935 to 938 (HRKR) match the Nuclear localization signal motif. A disordered region spans residues 944-989 (GDRLHDDPPQKPPRSITLREPSGNHTPPQLSPSLSQSTYTTGGSLD). Residues 969–984 (TPPQLSPSLSQSTYTT) show a composition bias toward low complexity. Ser-974 carries the phosphoserine modification. The residue at position 1007 (Tyr-1007) is a Phosphotyrosine. The region spanning 1056-1213 (IFQSCDYKAF…SFENKPSKPI (158 aa)) is the PID domain. Positions 1197–1248 (HSSTLPESFENKPSKPIPKPRVSIRKSVDLLHASHTGQEPSERHTEEALRKF) are disordered. Residues 1236–1248 (PSERHTEEALRKF) are compositionally biased toward basic and acidic residues.

In terms of assembly, isoform 3 interacts with DLG4. Interacts with EPHA8. Isoform 2 interacts with COIL. Isoform 4 interacts with APP and EPHA8. Isoform 6 interacts with EPHA8. Post-translationally, isoform 3 nuclear translocation requires an NMDAR-dependent proteolytic cleavage. In terms of tissue distribution, highly expressed in marrow from patients with pre-B ALL associated with the t(1;19) translocation. Strongly expressed in brain and testis. Expressed in fetal brain. Isoform 4 is highly expressed in brain (at protein level). Isoform 6 is expressed in brain and several cancer cell lines.

The protein resides in the cytoplasm. It localises to the nucleus. It is found in the postsynaptic density. Its subcellular location is the cell projection. The protein localises to the dendritic spine. The protein resides in the cajal body. Functionally, isoform 2 may participate in the regulation of nucleoplasmic coilin protein interactions in neuronal and transformed cells. Isoform 3 can regulate global protein synthesis by altering nucleolar numbers. Its function is as follows. Isoform 4 may play a role as a modulator of APP processing. Overexpression can down-regulate APP processing. This Homo sapiens (Human) protein is Ankyrin repeat and sterile alpha motif domain-containing protein 1B (ANKS1B).